The primary structure comprises 151 residues: FAD synthase (151 aa).

ATP contacts are provided by residues 9–10 (TF), 14–17 (HPGH), aspartate 96, and tyrosine 123.

It belongs to the archaeal FAD synthase family. As to quaternary structure, homodimer. It depends on a divalent metal cation as a cofactor.

It catalyses the reaction FMN + ATP + H(+) = FAD + diphosphate. The protein operates within cofactor biosynthesis; FAD biosynthesis; FAD from FMN: step 1/1. Its function is as follows. Catalyzes the transfer of the AMP portion of ATP to flavin mononucleotide (FMN) to produce flavin adenine dinucleotide (FAD) coenzyme. The chain is FAD synthase from Methanothermobacter thermautotrophicus (strain ATCC 29096 / DSM 1053 / JCM 10044 / NBRC 100330 / Delta H) (Methanobacterium thermoautotrophicum).